A 313-amino-acid polypeptide reads, in one-letter code: MIIVTGGAGMIGSNIVKSLNNKGFNDILVVDNLKDGKKFKNLVDLDITDYMDKEDFITQIMAGDDFGPIEAIFHEGACSATTEWDGKYIMMNNYEYSKELLHFCIEREIPFLYASSAATYGETDTFIEERAYEGALNVYGYSKQQFDNYVRRLWADAEEHNETLSQITGFRYFNVYGPREQHKGSMASVAFHLNNQMNAGDNPKLFEGSDEFKRDFVYVGDVAAVNLWFLENGVSGIYNCGTGRAEPFRAVAEAVIKHHGKGEVETIPFPEHLKGAYQEFTQADLTKLRAAGCDVEFKSVADGVAEYMAMINK.

Residues 10–11, 31–32, Lys-38, Lys-53, 75–79, and Asn-92 each bind NADP(+); these read MI, DN, and EGACS. The active-site Proton acceptor is Tyr-139. An NADP(+)-binding site is contributed by Lys-143. Asn-174 provides a ligand contact to substrate. NADP(+) contacts are provided by Val-175 and Lys-183. The Proton acceptor role is filled by Lys-183. Substrate contacts are provided by residues Ser-185, His-192, 206 to 209, Arg-214, and Tyr-277; that span reads FEGS.

Belongs to the NAD(P)-dependent epimerase/dehydratase family. HldD subfamily. In terms of assembly, homopentamer. NADP(+) serves as cofactor.

It carries out the reaction ADP-D-glycero-beta-D-manno-heptose = ADP-L-glycero-beta-D-manno-heptose. It participates in nucleotide-sugar biosynthesis; ADP-L-glycero-beta-D-manno-heptose biosynthesis; ADP-L-glycero-beta-D-manno-heptose from D-glycero-beta-D-manno-heptose 7-phosphate: step 4/4. In terms of biological role, catalyzes the interconversion between ADP-D-glycero-beta-D-manno-heptose and ADP-L-glycero-beta-D-manno-heptose via an epimerization at carbon 6 of the heptose. This is ADP-L-glycero-D-manno-heptose-6-epimerase from Aliivibrio fischeri (strain ATCC 700601 / ES114) (Vibrio fischeri).